A 725-amino-acid chain; its full sequence is MGTIAMASINTTSTSGGSAAPIQMSGKANAATPKLNSEVEMGSLPGDAQTQEDDIMQVARVGDVPAMEKLFESGEYDATYHDDEGITPLHWAAINNQYAMCKFLIEHGAEINRKGGESIATPLQWAAQRCHYYTVNLLLQHGADPLVTDAQGYNTLHISTFNGNVLLLVLLLHQGIPVDVIDTFGHTALMWAAYKGFPQCVDLFLRWGASVHATDEQGFTALHWALVKGSPGCILKLIEYGADRFAKTQTGKTPSVTAKELNTEVAWHRALTECGFDEDGHPAVPPWPGASYFLKDKRSFVTRFLFFWPFVLVWAMLVAMSSAPVYIGVPLGIAAVYAIQWVAQQVLEYAPSDMRHFHKTPWLTGIFAATLFWTGVNWLTTVLFATTLGAPEGKGHGILNFLFALFFGFTVYFYIASMRYDPGFVPKMNGIAEQKAVIDELLAQWKYDETNFCVTCMIQTPLRSKHCRRCQRCVAKHDHHCPWVYNCVGINNHRHFFFYLISLTMGIVSYDFLLYYYFDTVSKNASETCNVLSPTLCKYINADSYTSILAIWITMQLLWVTMLLFTQFIQVARAMTTYENMFGIRDGTNITALTSTGAPLDPNHPSLSATGPAAAHSHKHKGGMLKSLSRTLGVDPFIETITGRGAVSGKNKRKKKNPYSKGCITNCKDFWCDPAPIFGQRENGSAVLGGERVDYSAMYESPSLMTITGRRDRGGYEAVGTEDVV.

Residues 1–303 (MGTIAMASIN…LKDKRSFVTR (303 aa)) are Cytoplasmic-facing. 5 ANK repeats span residues 84-113 (EGITPLHWAAINNQYAMCKFLIEHGAEINR), 118-147 (SIATPLQWAAQRCHYYTVNLLLQHGADPLV), 151-180 (QGYNTLHISTFNGNVLLLVLLLHQGIPVDV), 184-213 (FGHTALMWAAYKGFPQCVDLFLRWGASVHA), and 217-246 (QGFTALHWALVKGSPGCILKLIEYGADRFA). Residues 304-324 (FLFFWPFVLVWAMLVAMSSAP) traverse the membrane as a helical segment. Topologically, residues 325 to 326 (VY) are lumenal. Residues 327–347 (IGVPLGIAAVYAIQWVAQQVL) form a helical membrane-spanning segment. Residues 348–364 (EYAPSDMRHFHKTPWLT) lie on the Cytoplasmic side of the membrane. The helical transmembrane segment at 365–385 (GIFAATLFWTGVNWLTTVLFA) threads the bilayer. Residues 386-397 (TTLGAPEGKGHG) lie on the Lumenal side of the membrane. The chain crosses the membrane as a helical span at residues 398 to 418 (ILNFLFALFFGFTVYFYIASM). Residues 419–495 (RYDPGFVPKM…NCVGINNHRH (77 aa)) are Cytoplasmic-facing. One can recognise a DHHC domain in the interval 451 to 501 (NFCVTCMIQTPLRSKHCRRCQRCVAKHDHHCPWVYNCVGINNHRHFFFYLI). Cysteine 481 acts as the S-palmitoyl cysteine intermediate in catalysis. A helical transmembrane segment spans residues 496-516 (FFFYLISLTMGIVSYDFLLYY). The Lumenal segment spans residues 517-547 (YFDTVSKNASETCNVLSPTLCKYINADSYTS). Residues 548-568 (ILAIWITMQLLWVTMLLFTQF) form a helical membrane-spanning segment. Over 569-725 (IQVARAMTTY…YEAVGTEDVV (157 aa)) the chain is Cytoplasmic.

It belongs to the DHHC palmitoyltransferase family. AKR/ZDHHC17 subfamily.

Its subcellular location is the early endosome membrane. It localises to the golgi apparatus membrane. It carries out the reaction L-cysteinyl-[protein] + hexadecanoyl-CoA = S-hexadecanoyl-L-cysteinyl-[protein] + CoA. In terms of biological role, palmitoyltransferase specific for casein kinase 1. This chain is Palmitoyltransferase AKR1 (AKR1), found in Gibberella zeae (strain ATCC MYA-4620 / CBS 123657 / FGSC 9075 / NRRL 31084 / PH-1) (Wheat head blight fungus).